A 264-amino-acid polypeptide reads, in one-letter code: Occludin/ELL domain-containing protein 1 (264 aa).

Over residues 1–10 (MHNPDGSASP) the composition is skewed to polar residues. The interval 1–112 (MHNPDGSASP…QPGPHKAKTK (112 aa)) is disordered. Positions 96 to 105 (PRPPCQPQPG) are enriched in pro residues. Positions 147–257 (PDYELKYPPV…QIQKFDDQGD (111 aa)) constitute an OCEL domain.

Belongs to the ELL/occludin family.

The sequence is that of Occludin/ELL domain-containing protein 1 (OCEL1) from Homo sapiens (Human).